Here is an 872-residue protein sequence, read N- to C-terminus: G-type lectin S-receptor-like serine/threonine-protein kinase At5g35370 (872 aa).

Residues 1-26 form the signal peptide; it reads MKSTFLLLLLLLSLNLLFVFVSCASS. Residues 27-443 are Extracellular-facing; the sequence is IEFVYPNFTA…NNNRGGSSFP (417 aa). N-linked (GlcNAc...) asparagine glycosylation is found at Asn33, Asn148, and Asn239. The Bulb-type lectin domain occupies 35 to 156; that stretch reads TASNLRFVDS…LNVSLWESFD (122 aa). Residues 283 to 322 form the EGF-like; atypical domain; it reads PMDSCQIPFVCGKLGLCNLDNASENQSCSCPDEMRMDAGK. 2 disulfides stabilise this stretch: Cys287–Cys299 and Cys293–Cys310. Asn303, Asn307, Asn342, Asn379, and Asn389 each carry an N-linked (GlcNAc...) asparagine glycan. One can recognise a PAN domain in the interval 338 to 423; that stretch reads CEARNISYLE…HDLIGYVKLS (86 aa). Intrachain disulfides connect Cys372–Cys394 and Cys376–Cys382. The chain crosses the membrane as a helical span at residues 444 to 464; the sequence is VIALVLLPCSGFFLLIALGLL. Topologically, residues 465–872 are cytoplasmic; it reads WWRRCAVMRY…IASQEVSGPR (408 aa). The 300-residue stretch at 515 to 814 folds into the Protein kinase domain; it reads ENFKMQIGSG…GSIPLGNPRM (300 aa). Residues 521 to 529 and Lys543 contribute to the ATP site; that span reads IGSGGFGSV. Residues 603–620 are caM-binding; that stretch reads GNGPVLEWQERFDIALGT. Catalysis depends on Asp639, which acts as the Proton acceptor. At Ser656 the chain carries Phosphoserine. Phosphothreonine is present on Thr673. A phosphoserine mark is found at Ser716 and Ser859. Positions 836–872 are disordered; it reads QNGESETMVFHRRESSNSGGSRQSASYIASQEVSGPR. A compositionally biased stretch (low complexity) spans 851-861; the sequence is SNSGGSRQSAS. Residues 862 to 872 are compositionally biased toward polar residues; the sequence is YIASQEVSGPR.

The protein belongs to the protein kinase superfamily. Ser/Thr protein kinase family.

The protein localises to the cell membrane. The enzyme catalyses L-seryl-[protein] + ATP = O-phospho-L-seryl-[protein] + ADP + H(+). The catalysed reaction is L-threonyl-[protein] + ATP = O-phospho-L-threonyl-[protein] + ADP + H(+). The polypeptide is G-type lectin S-receptor-like serine/threonine-protein kinase At5g35370 (Arabidopsis thaliana (Mouse-ear cress)).